We begin with the raw amino-acid sequence, 259 residues long: Deoxyribose-phosphate aldolase (259 aa).

Aspartate 102 (proton donor/acceptor) is an active-site residue. Catalysis depends on lysine 167, which acts as the Schiff-base intermediate with acetaldehyde. The Proton donor/acceptor role is filled by lysine 201.

The protein belongs to the DeoC/FbaB aldolase family. DeoC type 2 subfamily.

The protein localises to the cytoplasm. It carries out the reaction 2-deoxy-D-ribose 5-phosphate = D-glyceraldehyde 3-phosphate + acetaldehyde. It functions in the pathway carbohydrate degradation; 2-deoxy-D-ribose 1-phosphate degradation; D-glyceraldehyde 3-phosphate and acetaldehyde from 2-deoxy-alpha-D-ribose 1-phosphate: step 2/2. Catalyzes a reversible aldol reaction between acetaldehyde and D-glyceraldehyde 3-phosphate to generate 2-deoxy-D-ribose 5-phosphate. The chain is Deoxyribose-phosphate aldolase from Salmonella dublin (strain CT_02021853).